A 252-amino-acid chain; its full sequence is 3-deoxy-manno-octulosonate cytidylyltransferase (252 aa).

It belongs to the KdsB family.

The protein localises to the cytoplasm. The catalysed reaction is 3-deoxy-alpha-D-manno-oct-2-ulosonate + CTP = CMP-3-deoxy-beta-D-manno-octulosonate + diphosphate. Its pathway is nucleotide-sugar biosynthesis; CMP-3-deoxy-D-manno-octulosonate biosynthesis; CMP-3-deoxy-D-manno-octulosonate from 3-deoxy-D-manno-octulosonate and CTP: step 1/1. The protein operates within bacterial outer membrane biogenesis; lipopolysaccharide biosynthesis. In terms of biological role, activates KDO (a required 8-carbon sugar) for incorporation into bacterial lipopolysaccharide in Gram-negative bacteria. The protein is 3-deoxy-manno-octulosonate cytidylyltransferase of Vibrio cholerae serotype O1 (strain ATCC 39315 / El Tor Inaba N16961).